Consider the following 200-residue polypeptide: Nitrile hydratase subunit alpha (200 aa).

The Fe(3+) site is built by Cys105, Cys108, Ser109, and Cys110. The residue at position 108 (Cys108) is a Cysteine sulfinic acid (-SO2H). Cysteine sulfenic acid (-SOH) is present on Cys110.

This sequence belongs to the nitrile hydratase subunit alpha family. As to quaternary structure, heterodimer of an alpha and a beta chain. The cofactor is Fe(3+). Post-translationally, oxidation on Cys-108 is essential for the activity. Oxidation on Cys-110 stabilizes the Fe-NO ligand coordinated in the inactive form.

The catalysed reaction is an aliphatic primary amide = an aliphatic nitrile + H2O. With respect to regulation, inactivated by oxidation of Cys-110 to a sulfenic acid. NHase catalyzes the hydration of various nitrile compounds to the corresponding amides. Industrial production of acrylamide is now being developed using some of the enzymes of this class. This chain is Nitrile hydratase subunit alpha (nthA), found in Pseudomonas chlororaphis (Pseudomonas aureofaciens).